The following is a 1029-amino-acid chain: MHRASLICRLASPSRINAIRNASSGKSHISASTLVQHRNQSVAAAVKHEPFLNGSSSIYIEQMYEAWLQDPSSVHTSWDAYFRNVEAGAGPGQAFQAPPATAYAGALGVSPAAAQVTTSSAPATRLDTNASVQSISDHLKIQLLIRSYQTRGHNIADLDPLGINSADLDDTIPPELELSFYGLGERDLDREFLLPPTTFISEKKSLTLREILQRLKDIYCTSTGVEYMHLNNLEQQDWIRRRFEAPRVTELSHDQKKVLFKRLIRSTKFEEFLAKKWPSEKRFGLEGCEVLIPAMKQVIDSSSTLGVDSFVIGMPHRGRLNVLANVCRQPLATILSQFSTLEPADEGSGDVKYHLGVCIERLNRQSQKNVKIAVVANPSHLEAVDPVVMGKVRAEAFYAGDEKCDRTMAILLHGDAAFAGQGVVLETFNLDDLPSYTTHGAIHIVVNNQIGFTTDPRSSRSSPYCTDVGRVVGCPIFHVNVDDPEAVMHVCNVAADWRKTFKKDVIVDLVCYRRHGHNELDEPMFTQPLMYQRIKQTKTALEKYQEKILNEGVANEQYVKEELTKYGSILEDAYENAQKVTYVRNRDWLDSPWDDFFKKRDPLKLPSTGIEQENIEQIIGKFSQYPEGFNLHRGLERTLKGRQQMLKDNSLDWACGEALAFGSLLKEGIHVRLSGQDVQRGTFSHRHHVLHDQKVDQKIYNPLNDLSEGQGEYTVCNSSLSEYAVLGFELGYSMVDPNSLVIWEAQFGDFSNTAQCIIDQFISSGQSKWIRQSGLVMLLPHGYEGMGPEHSSARPERFLQMCNEDDEIDLEKIAFEGTFEAQQLHDTNWIVANCTTPANIYHLLRRQVTMPFRKPAVVFSPKSLLRHPMARSPVEDFQSGSNFQRVIPETGAPSQNPPDVKRVVFCTGKVYYDMVAARKHVGKENDVALVRVEQLSPFPYDLVQQECRKYQGAEILWAQEEHKNMGAWSFVQPRINSLLSIDGRATKYAGRLPSSSPATGNKFTHMQEQKEMMSKVFGVPKSKLEGFKA.

Thiamine diphosphate-binding residues include Arg317, Asp415, Asn448, Ile450, and Gln676. Residues Asp415, Asn448, and Ile450 each contribute to the Mg(2+) site.

It belongs to the alpha-ketoglutarate dehydrogenase family. In terms of assembly, homodimer. Component of the 2-oxoglutarate dehydrogenase complex. Thiamine diphosphate serves as cofactor. Requires Mg(2+) as cofactor.

Its subcellular location is the mitochondrion matrix. The enzyme catalyses N(6)-[(R)-lipoyl]-L-lysyl-[protein] + 2-oxoglutarate + H(+) = N(6)-[(R)-S(8)-succinyldihydrolipoyl]-L-lysyl-[protein] + CO2. The 2-oxoglutarate dehydrogenase complex catalyzes the overall conversion of 2-oxoglutarate to succinyl-CoA and CO(2). It contains multiple copies of three enzymatic components: 2-oxoglutarate dehydrogenase (E1), dihydrolipoamide succinyltransferase (E2) and lipoamide dehydrogenase (E3). This chain is 2-oxoglutarate dehydrogenase, mitochondrial (ogdh-1), found in Caenorhabditis elegans.